A 180-amino-acid polypeptide reads, in one-letter code: UPF0340 protein LL0489 (180 aa).

It belongs to the UPF0340 family.

This is UPF0340 protein LL0489 (yeiF) from Lactococcus lactis subsp. lactis (strain IL1403) (Streptococcus lactis).